Consider the following 1823-residue polypeptide: AF4/FMR2 family member lilli (1823 aa).

A compositionally biased stretch (low complexity) spans 1–41; that stretch reads MAQQQQQQHQQQQHHQQQQQQLQQQQQLLQYNNNSYNLNYN. Disordered regions lie at residues 1 to 87, 126 to 305, 422 to 544, 570 to 626, 686 to 712, 753 to 1057, 1071 to 1287, 1322 to 1350, 1413 to 1448, 1480 to 1531, 1547 to 1567, and 1715 to 1744; these read MAQQ…DPEI, GFGS…ENHI, QQLT…KKKY, AGPG…WHLS, DSRH…YGVG, PKNQ…DIPT, AAAQ…LKPR, ARQH…GART, FMLK…AEQL, ENSA…AIAS, TCSE…APRL, and GNTP…IVPQ. A compositionally biased stretch (basic and acidic residues) spans 53 to 79; it reads REKYERQQGIQSDDRETSLFGEPRRLN. Low complexity-rich tracts occupy residues 126–147, 156–174, and 205–249; these read GFGS…SSAS, QQQQ…QQQQ, and PSSS…TSSP. Positions 426-438 are enriched in pro residues; the sequence is PTPPKASPTPPVI. Residue threonine 434 is modified to Phosphothreonine. Over residues 441-454 the composition is skewed to basic and acidic residues; that stretch reads LKTEKNHSLEKQDS. The span at 456–466 shows a compositional bias: acidic residues; that stretch reads LENDLELSESD. Phosphoserine occurs at positions 463 and 465. Over residues 475 to 531 the composition is skewed to low complexity; it reads SAGNSSNSSESDSSESGSEASSKGDPQQQQQQQQQHLLHQQQQHQQQQLLLQQQQQQ. A compositionally biased stretch (gly residues) spans 582–598; the sequence is AAGGVGSGSGSTGGGSS. Residues 599 to 612 show a composition bias toward low complexity; it reads SSGMGTMSSSNSSN. Positions 764–785 are enriched in low complexity; sequence SDSGSGSSGSGSSSSDSAGGSS. Residues 818-827 show a composition bias toward polar residues; it reads HKAQPNSVTL. Residues 839–849 are compositionally biased toward basic residues; the sequence is PRQKKPRKKKM. 2 positions are modified to phosphoserine: serine 859 and serine 860. 5 stretches are compositionally biased toward low complexity: residues 877-906, 917-947, 962-979, 1002-1057, and 1102-1161; these read AATA…AAPA, QAQQ…SSQA, GTAS…VAAG, AAMA…DIPT, and NSSN…QLLQ. The a.T hook DNA-binding region spans 908 to 920; the sequence is KKGRGRPRKQAQQ. Residues serine 939 and serine 941 each carry the phosphoserine modification. A compositionally biased stretch (polar residues) spans 1172 to 1181; sequence TLKQSAQQRL. 2 stretches are compositionally biased toward low complexity: residues 1182–1203 and 1253–1280; these read SSSD…ASSS and QQQQ…QQQQ. Positions 1334-1344 are enriched in polar residues; the sequence is TQQNGHLSSRS. Polar residues predominate over residues 1480 to 1496; it reads ENSANASPNKLQQQNAR. Phosphoserine is present on serine 1486. Over residues 1497 to 1531 the composition is skewed to low complexity; the sequence is QLPLSQSQLQHQHQHQHQLQQQQSQSTATGHAIAS. Residues 1555-1565 show a composition bias toward pro residues; that stretch reads TPPPAAPPPAP. Low complexity predominate over residues 1715-1735; that stretch reads GNTPSSISPSNSVGSQGSGSN.

The protein belongs to the AF4 family.

Its subcellular location is the nucleus. Has a role in transcriptional regulation. Acts in parallel with the Ras/MAPK and the PI3K/PKB pathways in the control of cell identity and cellular growth. Essential for regulation of the cytoskeleton and cell growth but not for cell proliferation or growth rate. Required specifically for the microtubule-based basal transport of lipid droplets. Plays a partially redundant function downstream of Raf in cell fate specification in the developing eye. Pair-rule protein that regulates embryonic cellularization, gastrulation and segmentation. This is AF4/FMR2 family member lilli from Drosophila virilis (Fruit fly).